The primary structure comprises 622 residues: Probable Xaa-Pro aminopeptidase P (622 aa).

The Mn(2+) site is built by aspartate 419, aspartate 430, glutamate 528, and glutamate 542.

This sequence belongs to the peptidase M24B family. Mn(2+) serves as cofactor.

It carries out the reaction Release of any N-terminal amino acid, including proline, that is linked to proline, even from a dipeptide or tripeptide.. Functionally, catalyzes the removal of a penultimate prolyl residue from the N-termini of peptides. This is Probable Xaa-Pro aminopeptidase P (AMPP) from Coprinopsis cinerea (strain Okayama-7 / 130 / ATCC MYA-4618 / FGSC 9003) (Inky cap fungus).